The chain runs to 529 residues: Chromosomal replication initiator protein DnaA (529 aa).

The tract at residues 1–72 (MQDFWHAASA…SLACDYWEAT (72 aa)) is domain I, interacts with DnaA modulators. A domain II region spans residues 72–192 (TVDVQFVLDP…HVDDSVHERS (121 aa)). The segment at 193-409 (RLNQILTFDN…GALRKILAYS (217 aa)) is domain III, AAA+ region. Gly237, Gly239, Lys240, and Thr241 together coordinate ATP. Residues 410–529 (NFHGKEITIE…LHVLEQTLKG (120 aa)) are domain IV, binds dsDNA.

Belongs to the DnaA family. Oligomerizes as a right-handed, spiral filament on DNA at oriC.

The protein localises to the cytoplasm. Its function is as follows. Plays an essential role in the initiation and regulation of chromosomal replication. ATP-DnaA binds to the origin of replication (oriC) to initiate formation of the DNA replication initiation complex once per cell cycle. Binds the DnaA box (a 9 base pair repeat at the origin) and separates the double-stranded (ds)DNA. Forms a right-handed helical filament on oriC DNA; dsDNA binds to the exterior of the filament while single-stranded (ss)DNA is stabiized in the filament's interior. The ATP-DnaA-oriC complex binds and stabilizes one strand of the AT-rich DNA unwinding element (DUE), permitting loading of DNA polymerase. After initiation quickly degrades to an ADP-DnaA complex that is not apt for DNA replication. Binds acidic phospholipids. In Ralstonia pickettii (strain 12J), this protein is Chromosomal replication initiator protein DnaA.